Here is a 199-residue protein sequence, read N- to C-terminus: Probable molybdenum cofactor guanylyltransferase (199 aa).

Residues 8-10, K20, D65, and D96 each bind GTP; that span reads LAG. D96 provides a ligand contact to Mg(2+).

The protein belongs to the MobA family. Mg(2+) is required as a cofactor.

It localises to the cytoplasm. It catalyses the reaction Mo-molybdopterin + GTP + H(+) = Mo-molybdopterin guanine dinucleotide + diphosphate. Transfers a GMP moiety from GTP to Mo-molybdopterin (Mo-MPT) cofactor (Moco or molybdenum cofactor) to form Mo-molybdopterin guanine dinucleotide (Mo-MGD) cofactor. The polypeptide is Probable molybdenum cofactor guanylyltransferase (Bacillus subtilis (strain 168)).